A 382-amino-acid polypeptide reads, in one-letter code: MKALHFGAGNIGRGFIGKLLADAGIQLTFADVNQVVLDALNARHSYQVHVVGETEQVDTVSGVNAVSSIGDDVVDLIAQVDLVTTAVGPVVLERIAPAIAKGLVKRKEQGNESPLNIIACENMVRGTTQLKGHVMNALPEDAKAWVEEHVGFVDSAVDRIVPPSASATNDPLEVTVETFSEWIVDKTQFKGALPNIPGMELTDNLMAFVERKLFTLNTGHAITAYLGKLAGHQTIRDAILDEKIRAVVKGAMEESGAVLIKRYGFDADKHAAYIRKILGRFENPYLKDDVERVGRQPLRKLSAGDRLIKPLLGTLEYGLPHKNLIEGIAAAMHFRSEDDPQAQELAALIADKGPQAALAQISGLDANSEVVSEAVTAYKAMQ.

Residue 3–14 (ALHFGAGNIGRG) participates in NAD(+) binding. Position 269 is an N6-acetyllysine (Lys269).

The protein belongs to the mannitol dehydrogenase family.

It catalyses the reaction D-mannitol 1-phosphate + NAD(+) = beta-D-fructose 6-phosphate + NADH + H(+). The sequence is that of Mannitol-1-phosphate 5-dehydrogenase from Escherichia coli O17:K52:H18 (strain UMN026 / ExPEC).